A 191-amino-acid polypeptide reads, in one-letter code: Calcium-binding protein CML42 (191 aa).

EF-hand domains lie at 25–60 (LNALRLQRIFDLFDKNGDGFITVEELSQALTRLGLN), 116–151 (ENESDLAEAFKVFDENGDGFISARELQTVLKKLGLP), and 154–189 (GEMERVEKMIVSVDRNQDGRVDFFEFKNMMRTVVIP). Residues Asp38, Asn40, Asp42, Glu49, Asp129, Asn131, Asp133, Glu140, Asp167, Asn169, Asp171, Arg173, and Glu178 each coordinate Ca(2+).

As to quaternary structure, interacts with KIC. Expressed in seedling shoots, roots, rosette leaves and flowers. Expressed in the leaf trichome support cells.

Probable calcium sensor that binds calcium in vitro. Involved in the regulation of trichome branching. The chain is Calcium-binding protein CML42 (CML42) from Arabidopsis thaliana (Mouse-ear cress).